The following is a 172-amino-acid chain: MSAKYTLIFALAALCCLVFSTEAAAQRSRVLSSRRGSELVEKTSDNKEDSELAAQEQDLERQEQEEQNDRLEGRSDDVAEGSDNKEDKETATNNKDTIVKPNKDDARARRIVRAGRRRGGRRGGRRGGRRSARKSVRRGGRRGGRRRGGRRGRGGARRRTSVKRRSGKGNKA.

A signal peptide spans 1–25 (MSAKYTLIFALAALCCLVFSTEAAA). Positions 27–172 (RSRVLSSRRG…KRRSGKGNKA (146 aa)) are disordered. Composition is skewed to basic and acidic residues over residues 35–50 (RGSE…KEDS), 58–90 (DLER…DKET), and 97–108 (TIVKPNKDDARA). Residues 45-74 (DNKEDSELAAQEQDLERQEQEEQNDRLEGR) adopt a coiled-coil conformation. Over residues 109-172 (RRIVRAGRRR…KRRSGKGNKA (64 aa)) the composition is skewed to basic residues.

As to expression, detected in the brain where it accumulates in the dorsal fan-shaped body following sleep deprivation (at protein level). Expressed in the adult body.

It is found in the secreted. Antimicrobial protein which is essential for the homeostatic regulation of sleep. Promotes sleep following sleep deprivation or bacterial infection and increases survival following bacterial infection. Likely to promote survival to bacterial infection in two ways; by contributing to the innate immune response and by promoting sleep during sickness to aid recovery. This Drosophila melanogaster (Fruit fly) protein is Protein nemuri.